The primary structure comprises 142 residues: Large ribosomal subunit protein uL13 (142 aa).

Belongs to the universal ribosomal protein uL13 family. In terms of assembly, part of the 50S ribosomal subunit.

This protein is one of the early assembly proteins of the 50S ribosomal subunit, although it is not seen to bind rRNA by itself. It is important during the early stages of 50S assembly. The sequence is that of Large ribosomal subunit protein uL13 from Coxiella burnetii (strain CbuG_Q212) (Coxiella burnetii (strain Q212)).